Reading from the N-terminus, the 111-residue chain is uncharacterized protein (111 aa).

The protein resides in the mitochondrion. This is an uncharacterized protein from Arabidopsis thaliana (Mouse-ear cress).